Consider the following 164-residue polypeptide: Thiol peroxidase (164 aa).

Residues 16–162 form the Thioredoxin domain; sequence LQVGEIAHDF…YDAAIEAVKV (147 aa). The Cysteine sulfenic acid (-SOH) intermediate role is filled by Cys-58. Residues Cys-58 and Cys-92 are joined by a disulfide bond.

It belongs to the peroxiredoxin family. Tpx subfamily. In terms of assembly, homodimer.

It catalyses the reaction a hydroperoxide + [thioredoxin]-dithiol = an alcohol + [thioredoxin]-disulfide + H2O. Its function is as follows. Thiol-specific peroxidase that catalyzes the reduction of hydrogen peroxide and organic hydroperoxides to water and alcohols, respectively. Plays a role in cell protection against oxidative stress by detoxifying peroxides. In Streptococcus parasanguinis, this protein is Thiol peroxidase.